A 592-amino-acid chain; its full sequence is Frizzled-1 (592 aa).

The segment at 1-26 (MAERRGPAGGGSGEVGGGRRAGGDRC) is disordered. The N-terminal stretch at 1–48 (MAERRGPAGGGSGEVGGGRRAGGDRCPRRPPALPLLLLLWAAALPAGG) is a signal peptide. Over residues 7–20 (PAGGGSGEVGGGRR) the composition is skewed to gly residues. The Extracellular segment spans residues 49-271 (QPAAQPAALS…PEELRFSRTW (223 aa)). An FZ domain is found at 65–184 (PDHGYCQPIS…HGAGELCVGQ (120 aa)). Intrachain disulfides connect C70–C131, C78–C124, C115–C152, C141–C181, and C145–C169. An N-linked (GlcNAc...) asparagine glycan is attached at N84. N-linked (GlcNAc...) asparagine glycosylation occurs at N185. The segment at 185-219 (NASERGTPTPALRPESWTSNPHRGGGAGGSGPGEA) is disordered. Residues 207-218 (RGGGAGGSGPGE) are compositionally biased toward gly residues. A helical transmembrane segment spans residues 272–292 (IGIWSVLCCASTLFTVLTYLV). Residues 293-303 (DMKRFSYPERP) are Cytoplasmic-facing. The chain crosses the membrane as a helical span at residues 304-324 (IIFLSGCYTAVAVAYIAGFLL). Topologically, residues 325 to 351 (EERVVCNERFAEDGSRTVAQGTKREGC) are extracellular. A helical transmembrane segment spans residues 352–372 (TILFMMLYFFGMASSIWWVIL). At 373–394 (SLTWFLAAGMKWGHEAIEANSQ) the chain is on the cytoplasmic side. Residues 395-415 (YFHLAAWAVPAIKTITILALG) form a helical membrane-spanning segment. Topologically, residues 416-438 (QVDGDVLSGVCFVGINNVDALRG) are extracellular. A helical membrane pass occupies residues 439 to 459 (FVLAPLFVYLFIGTSFLLAGF). Topologically, residues 460–485 (VSLFRIRTIMKHDGTKTEKLEKLMVR) are cytoplasmic. Residues 486 to 506 (IGIFSVLYTVPATIVIACYFY) traverse the membrane as a helical segment. Residues 507-546 (EQAFREQWERSWVTQSCKSYAIPCPNNHSSHHPPMSPDFT) are Extracellular-facing. N533 carries an N-linked (GlcNAc...) asparagine glycan. A helical transmembrane segment spans residues 547–567 (VFMIKYLMTLIVGITSGFWIW). Residues 568-592 (SGKTLNSWRKFYTRLTNSKQGETTV) are Cytoplasmic-facing. Residues 570 to 575 (KTLNSW) carry the Lys-Thr-X-X-X-Trp motif, mediates interaction with the PDZ domain of Dvl family members motif. A PDZ-binding motif is present at residues 590 to 592 (TTV).

This sequence belongs to the G-protein coupled receptor Fz/Smo family. As to expression, expressed in the lens, otic placode (medial wall of the vesicle) and in epibranchial placode. Also expressed in the developing somites (dermomyotome).

The protein resides in the cell membrane. In terms of biological role, receptor for Wnt proteins. Functions in the canonical Wnt/beta-catenin signaling pathway. The canonical Wnt/beta-catenin signaling pathway leads to the activation of disheveled proteins, inhibition of GSK-3 kinase, nuclear accumulation of beta-catenin and activation of Wnt target genes. A second signaling pathway involving PKC and calcium fluxes has been seen for some family members, but it is not yet clear if it represents a distinct pathway or if it can be integrated in the canonical pathway, as PKC seems to be required for Wnt-mediated inactivation of GSK-3 kinase. Both pathways seem to involve interactions with G-proteins. May be involved in transduction and intercellular transmission of polarity information during tissue morphogenesis and/or in differentiated tissues. In Gallus gallus (Chicken), this protein is Frizzled-1 (FZD1).